Reading from the N-terminus, the 184-residue chain is Ras-related protein Rap-1b (184 aa).

Position 10 to 17 (10 to 17) interacts with GTP; that stretch reads GSGGVGKS. The Effector region motif lies at 32–40; that stretch reads YDPTIEDSY. Residues 57-61 and 116-119 contribute to the GTP site; these read DTAGT and NKCD. The residue at position 181 (Cys181) is a Cysteine methyl ester. The S-geranylgeranyl cysteine moiety is linked to residue Cys181. The propeptide at 182-184 is removed in mature form; the sequence is HLL.

This sequence belongs to the small GTPase superfamily. Ras family.

Its subcellular location is the cell membrane. The protein resides in the cytoplasm. The protein localises to the cytosol. It is found in the cell junction. It carries out the reaction GTP + H2O = GDP + phosphate + H(+). In terms of biological role, probable GTP-binding protein that possesses GTPase activity. May play a role in endothelial cell polarity and endothelial barrier function. The sequence is that of Ras-related protein Rap-1b (rap1b) from Xenopus laevis (African clawed frog).